Here is a 211-residue protein sequence, read N- to C-terminus: Beta-crystallin B3 (211 aa).

Methionine 1 bears the N-acetylmethionine mark. Alanine 2 carries the N-acetylalanine; in Beta-crystallin B3, N-terminally processed modification. Positions 2–23 (AEQHSTPEQAAAGKSHGGLGGS) are N-terminal arm. Beta/gamma crystallin 'Greek key' domains are found at residues 24 to 63 (YKVIVYEMENFQGKRCELTAECPNLTESLLEKVGSIQVES) and 64 to 108 (GPWL…RPLH). The tract at residues 109–113 (IDGPD) is connecting peptide. 2 consecutive Beta/gamma crystallin 'Greek key' domains span residues 114–155 (HKLH…RAIN) and 156–198 (GTWV…RRIR). A C-terminal arm region spans residues 200-211 (QKWHKRGVFLSS).

Belongs to the beta/gamma-crystallin family. Homo/heterodimer, or complexes of higher-order. The structure of beta-crystallin oligomers seems to be stabilized through interactions between the N-terminal arms.

Functionally, crystallins are the dominant structural components of the vertebrate eye lens. In Bos taurus (Bovine), this protein is Beta-crystallin B3 (CRYBB3).